Consider the following 388-residue polypeptide: Succinate--CoA ligase [ADP-forming] subunit beta (388 aa).

The ATP-grasp domain maps to 9 to 244 (KQLFAEYGLP…PSQDDPREAH (236 aa)). ATP is bound by residues lysine 46, 53–55 (GRG), glutamate 99, threonine 102, and glutamate 107. Mg(2+) is bound by residues asparagine 199 and aspartate 213. Residues asparagine 264 and 321–323 (GIV) each bind substrate.

It belongs to the succinate/malate CoA ligase beta subunit family. As to quaternary structure, heterotetramer of two alpha and two beta subunits. The cofactor is Mg(2+).

The catalysed reaction is succinate + ATP + CoA = succinyl-CoA + ADP + phosphate. It carries out the reaction GTP + succinate + CoA = succinyl-CoA + GDP + phosphate. It functions in the pathway carbohydrate metabolism; tricarboxylic acid cycle; succinate from succinyl-CoA (ligase route): step 1/1. Succinyl-CoA synthetase functions in the citric acid cycle (TCA), coupling the hydrolysis of succinyl-CoA to the synthesis of either ATP or GTP and thus represents the only step of substrate-level phosphorylation in the TCA. The beta subunit provides nucleotide specificity of the enzyme and binds the substrate succinate, while the binding sites for coenzyme A and phosphate are found in the alpha subunit. This chain is Succinate--CoA ligase [ADP-forming] subunit beta, found in Pseudomonas fluorescens (strain ATCC BAA-477 / NRRL B-23932 / Pf-5).